Consider the following 1023-residue polypeptide: MGAGALAICQSKAAVRLKEDMKKIVAVPLNEQKDFTYQKLFGVSLQELERQGLTENGIPAVVWNIVEYLTQHGLTQEGLFRVNGNVKVVEQLRLKFESGVPVELGKDGDVCSAASLLKLFLRELPDSLITSALQPRFIQLFQDGRNDVQESSLRDLIKELPDTHYCLLKYLCQFLTKVAKHHVQNRMNVHNLATVFGPNCFHVPPGLEGMKEQDLCNKIMAKILENYNTLFEVEYTENDHLRCENLARLIIVKEVYYKNSLPILLTRGLERDMPKPPPKTKIPKSRSEGSIQAHRVLQPELSDGIPQLSLRLSYRKACLEDMNSAEGAISAKLVPSSQEDERPLSPFYLSAHVPQVSNVSATGELLERTIRSAVEQHLFDVNNSGGQSSEDSESGTLSASSATSARQRRRQSKEQDEVRHGRDKGLINKENTPSGFNHLDDCILNTQEVEKVHKNTFGCAGERSKPKRQKSSTKLSELHDNQDGLVNMESLNSTRSHERTGPDDFEWMSDERKGNEKDGGHTQHFESPTMKIQEHPSLSDTKQQRNQDAGDQEESFVSEVPQSDLTALCDEKNWEEPIPAFSSWQRENSDSDEAHLSPQAGRLIRQLLDEDSDPMLSPRFYAYGQSRQYLDDTEVPPSPPNSHSFMRRRSSSLGSYDDEQEDLTPAQLTRRIQSLKKKIRKFEDRFEEEKKYRPSHSDKAANPEVLKWTNDLAKFRRQLKESKLKISEEDLTPRMRQRSNTLPKSFGSQLEKEDEKKQELVDKAIKPSVEATLESIQRKLQEKRAESSRPEDIKDMTKDQIANEKVALQKALLYYESIHGRPVTKNERQVMKPLYDRYRLVKQILSRANTIPIIGSPSSKRRSPLLQPIIEGETASFFKEIKEEEEGSEDDSNVKPDFMVTLKTDFSARCFLDQFEDDADGFISPMDDKIPSKCSQDTGLSNLHAASIPELLEHLQEMREEKKRIRKKLRDFEDNFFRQNGRNVQKEDRTPMAEEYSEYKHIKAKLRLLEVLISKRDTDSKSM.

One can recognise a Rho-GAP domain in the interval 43-231; sequence VSLQELERQG…KILENYNTLF (189 aa). The segment at 269 to 290 is disordered; the sequence is LERDMPKPPPKTKIPKSRSEGS. Position 345 is a phosphoserine (Ser-345). 2 disordered regions span residues 381-437 and 459-562; these read VNNS…SGFN and CAGE…EVPQ. A compositionally biased stretch (low complexity) spans 384-405; that stretch reads SGGQSSEDSESGTLSASSATSA. Basic and acidic residues-rich tracts occupy residues 412–427 and 509–524; these read SKEQ…KGLI and SDER…HTQH. The span at 536 to 549 shows a compositional bias: polar residues; the sequence is PSLSDTKQQRNQDA. Ser-597 and Ser-617 each carry phosphoserine. 2 disordered regions span residues 628–663 and 726–759; these read QYLD…QEDL and ISEE…KKQE. A coiled-coil region spans residues 666-730; sequence AQLTRRIQSL…ESKLKISEED (65 aa). Ser-727 carries the phosphoserine modification. Residue Thr-732 is modified to Phosphothreonine. Residues 738-748 show a composition bias toward polar residues; it reads RSNTLPKSFGS. Basic and acidic residues predominate over residues 750 to 759; the sequence is LEKEDEKKQE. Positions 946–978 form a coiled coil; that stretch reads ASIPELLEHLQEMREEKKRIRKKLRDFEDNFFR.

It belongs to the FAM13 family. Isoform 1 is widely expressed, with highest expression in skeletal muscle, thymus, brain and lung. Isoform 3 is less abundant than isoform 1 and predominantly expressed in kidney, pancreas, liver, lung and thymus.

This Homo sapiens (Human) protein is Protein FAM13A (FAM13A).